The sequence spans 217 residues: Ras-related protein Rab-19 (217 aa).

GTP contacts are provided by serine 26, valine 28, glycine 29, lysine 30, threonine 31, cysteine 32, tyrosine 42, serine 43, glutamate 44, serine 45, and threonine 49. Mg(2+) is bound at residue threonine 31. A Switch 1 motif is present at residues 39–54; the sequence is SGVYSESQQNTIGVDF. Mg(2+) contacts are provided by threonine 49 and aspartate 72. The Switch 2 signature appears at 74-89; sequence AGQERFRTITQSYYRS. Residues glycine 75, asparagine 130, lysine 131, aspartate 133, serine 161, alanine 162, and lysine 163 each contribute to the GTP site. 2 S-geranylgeranyl cysteine lipidation sites follow: cysteine 215 and cysteine 217. The residue at position 217 (cysteine 217) is a Cysteine methyl ester.

This sequence belongs to the small GTPase superfamily. Rab family. It depends on Mg(2+) as a cofactor. Expressed in a tissue-specific manner. Detected at high levels in intestine, lung and spleen, and at a lower level in kidney.

Its subcellular location is the cell membrane. The catalysed reaction is GTP + H2O = GDP + phosphate + H(+). Regulated by guanine nucleotide exchange factors (GEFs) which promote the exchange of bound GDP for free GTP. Regulated by GTPase activating proteins (GAPs) which increase the GTP hydrolysis activity. Inhibited by GDP dissociation inhibitors (GDIs). In terms of biological role, the small GTPases Rab are key regulators of intracellular membrane trafficking, from the formation of transport vesicles to their fusion with membranes. Rabs cycle between an inactive GDP-bound form and an active GTP-bound form that is able to recruit to membranes different set of downstream effectors directly responsible for vesicle formation, movement, tethering and fusion. This is Ras-related protein Rab-19 from Mus musculus (Mouse).